The primary structure comprises 420 residues: GDP-mannose transporter 2 (420 aa).

A compositionally biased stretch (polar residues) spans 1–11 (MASYTPSSSRP). Residues 1–21 (MASYTPSSSRPHTPLGLSPRG) form a disordered region. Residues 1 to 76 (MASYTPSSSR…KAKKEEVCMP (76 aa)) are Cytoplasmic-facing. A helical membrane pass occupies residues 77 to 97 (ASTTVLPILSYCVASIMMTVV). At 98-106 (NKFVVSGRQ) the chain is on the lumenal side. A helical membrane pass occupies residues 107–127 (FTMTFLLLAIQSFVCVACVWL). Topologically, residues 128–145 (AKRIGVINFRDWDMNDAK) are cytoplasmic. Residues 146–168 (AWFPVSSLLVAVIYTGSKSLQFL) form a helical membrane-spanning segment. At 169–171 (SIP) the chain is on the lumenal side. The helical transmembrane segment at 172-194 (VYTIFKNLTIILIAYGEVIWFGG) threads the bilayer. Over 195–200 (HVTPLT) the chain is Cytoplasmic. Residues 201 to 223 (LCSFFLMVGSSVIAAWADISTTL) form a helical membrane-spanning segment. The Lumenal segment spans residues 224 to 251 (SKLSAGVAVVDPISGADVPLSSISVMDT). The chain crosses the membrane as a helical span at residues 252–272 (MNVGYLWMFINCLASAGYVLF). At 273-293 (MRKRIKVTGFKDWDSMFYNNL) the chain is on the cytoplasmic side. A helical transmembrane segment spans residues 294–314 (LSIPVLFVFSLIIEDWGAASF). The Lumenal portion of the chain corresponds to 315–323 (SRNFPEEGR). A helical membrane pass occupies residues 324–344 (AFLLSAIAFSGAAAVFISYST). The Cytoplasmic segment spans residues 345 to 355 (AWCVRICGATT). A helical membrane pass occupies residues 356 to 376 (YSLVGALNKLPVAASGILFFG). The Lumenal segment spans residues 377 to 378 (DP). The chain crosses the membrane as a helical span at residues 379–399 (VNFGNVSAILVGGVSGIVYAV). Over 400–420 (AKTNQAKVEKSKQARGGESKA) the chain is Cytoplasmic.

It belongs to the TPT transporter family. SLC35D subfamily. As to quaternary structure, homooligomer.

Its subcellular location is the golgi apparatus membrane. It is found in the cytoplasmic vesicle membrane. The protein resides in the endoplasmic reticulum membrane. Involved in the import of GDP-mannose from the cytoplasm into the Golgi lumen. The protein is GDP-mannose transporter 2 (GMT2) of Cryptococcus neoformans var. neoformans serotype D (strain B-3501A) (Filobasidiella neoformans).